Here is a 181-residue protein sequence, read N- to C-terminus: MGNCLQRTTRWQLDMQETPWNLRLSAKGRTCRYFRGWSCCHSVEGCSCLPWKNIRTFKARQESPKQNEGMTSAPVQDNANETYTEELCYILVDHEAVRGRPSVNPAEGFYENISNKAERHKESSRGTETEYSVLRFPSPPQPLPSTDDEYELLMPSRFSSHAFQQPRPLTTPYETHFSYPQ.

The residue at position 102 (Ser102) is a Phosphoserine. A compositionally biased stretch (basic and acidic residues) spans 117-128; the sequence is AERHKESSRGTE. Residues 117 to 181 form a disordered region; sequence AERHKESSRG…PYETHFSYPQ (65 aa). Tyr150 bears the Phosphotyrosine mark.

In terms of assembly, interacts with ACTB and MYH2; the interaction with MYH2 is increased by IL6-induced phosphorylation. Interacts (via C-terminus) with ARHGEF11 (via DH domain). Interacts with ARHGEF12. Interacts with SYK; the interaction increases after B-cell receptor stimulation, resulting in enhanced SYK autophosphorylation and activity. Phosphorylation on tyrosine residues can be induced by IL6. Phosphorylation is mediated by LYN. Post-translationally, targeted by the ubiquitin E3 ligase subunit FBXO10 to mediate its ubiquitination and degradation. In terms of tissue distribution, highly expressed in normal germinal center (GC) B-cells. Expressed in spleen and, to a lesser extent, bone marrow.

Its subcellular location is the cytoplasm. The protein localises to the cell membrane. In terms of biological role, involved in the negative regulation of lymphocyte motility. It mediates the migration-inhibitory effects of IL6. Serves as a positive regulator of the RhoA signaling pathway. Enhancement of RhoA activation results in inhibition of lymphocyte and lymphoma cell motility by activation of its downstream effector ROCK. Is a regulator of B-cell receptor signaling, that acts through SYK kinase activation. The chain is Germinal center-associated signaling and motility protein (Gcsam) from Mus musculus (Mouse).